We begin with the raw amino-acid sequence, 333 residues long: Taste receptor type 2 member 38 (333 aa).

Topologically, residues 1 to 17 (MLTLTRIHTVSYEVRST) are extracellular. A helical membrane pass occupies residues 18–38 (FLFISVLEFAVGFLTNAFVFL). At 39–55 (VNFWDVVKRQPLSNSDC) the chain is on the cytoplasmic side. Residues 56-76 (VLLCLSISRLFLHGLLFLSAI) form a helical membrane-spanning segment. The Extracellular portion of the chain corresponds to 77 to 94 (QLTHFQKLSEPLNHSYQA). A helical membrane pass occupies residues 95–115 (IIMLWMIANQANLWLAACLSL). The Cytoplasmic portion of the chain corresponds to 116–142 (LYCSKLIRFSHTFLICLASWVSRKISQ). Residues 143–163 (MLLGIILCSCICTVLCVWCFF) traverse the membrane as a helical segment. The Extracellular segment spans residues 164 to 190 (SRPHFTVTTVLFMNNNTRLNWQIKDLN). Asn178 carries an N-linked (GlcNAc...) asparagine glycan. The chain crosses the membrane as a helical span at residues 191 to 211 (LFYSFLFCYLWSVPPFLLFLV). Over 212–251 (SSGMLTVSLGRHMRTMKVYTRDSRDPSLEAHIKALKSLVS) the chain is Cytoplasmic. The helical transmembrane segment at 252 to 272 (FFCFFVISSCAAFISVPLLIL) threads the bilayer. Residues 273 to 276 (WRDK) are Extracellular-facing. A helical membrane pass occupies residues 277–297 (IGVMVCVGIMAACPSGHAAVL). Over 298–333 (ISGNAKLRRAVTTILLWAQSSLKVRADHKADSRTLC) the chain is Cytoplasmic.

The protein belongs to the G-protein coupled receptor T2R family.

The protein localises to the membrane. Receptor that may play a role in the perception of bitterness and is gustducin-linked. May play a role in sensing the chemical composition of the gastrointestinal content. The activity of this receptor may stimulate alpha gustducin, mediate PLC-beta-2 activation and lead to the gating of TRPM5. The polypeptide is Taste receptor type 2 member 38 (TAS2R38) (Pan troglodytes (Chimpanzee)).